The sequence spans 173 residues: Photosystem I assembly protein Ycf3 (173 aa).

3 TPR repeats span residues 36 to 69 (AFAY…EQGE), 73 to 106 (SYIL…NPRL), and 121 to 154 (GELS…APNN).

It belongs to the Ycf3 family.

Its subcellular location is the cellular thylakoid membrane. Its function is as follows. Essential for the assembly of the photosystem I (PSI) complex. May act as a chaperone-like factor to guide the assembly of the PSI subunits. The protein is Photosystem I assembly protein Ycf3 of Synechococcus sp. (strain JA-2-3B'a(2-13)) (Cyanobacteria bacterium Yellowstone B-Prime).